Reading from the N-terminus, the 278-residue chain is Thiazole synthase (278 aa).

The active-site Schiff-base intermediate with DXP is the Lys107. 1-deoxy-D-xylulose 5-phosphate-binding positions include Gly168, 194–195, and 216–217; these read AG and AS.

The protein belongs to the ThiG family. Homotetramer. Forms heterodimers with either ThiH or ThiS.

Its subcellular location is the cytoplasm. The catalysed reaction is [ThiS sulfur-carrier protein]-C-terminal-Gly-aminoethanethioate + 2-iminoacetate + 1-deoxy-D-xylulose 5-phosphate = [ThiS sulfur-carrier protein]-C-terminal Gly-Gly + 2-[(2R,5Z)-2-carboxy-4-methylthiazol-5(2H)-ylidene]ethyl phosphate + 2 H2O + H(+). It participates in cofactor biosynthesis; thiamine diphosphate biosynthesis. Catalyzes the rearrangement of 1-deoxy-D-xylulose 5-phosphate (DXP) to produce the thiazole phosphate moiety of thiamine. Sulfur is provided by the thiocarboxylate moiety of the carrier protein ThiS. In vitro, sulfur can be provided by H(2)S. This Corynebacterium jeikeium (strain K411) protein is Thiazole synthase.